The sequence spans 747 residues: Tegument protein UL46 homolog (747 aa).

Disordered stretches follow at residues 437-484, 525-593, 611-665, and 689-747; these read FCCP…SPRT, QRSD…DYMR, TPYM…PEVV, and SASR…VSSL. Over residues 465-484 the composition is skewed to polar residues; sequence LRSSRQLPTSPPSNIVSPRT. The segment covering 528-540 has biased composition (low complexity); sequence DSSSSDNSTCSST. The segment covering 541-553 has biased composition (polar residues); the sequence is ETQYITLPSTPSP. Basic and acidic residues-rich tracts occupy residues 707 to 724 and 736 to 747; these read VCRE…DGFI and KHPDQTERVSSL.

The protein belongs to the herpesviridae HHV-1 VP11/12 protein family.

The protein localises to the virion tegument. It localises to the host cell membrane. Its function is as follows. Modulates alpha trans-inducing factor-dependent activation of alpha genes. The chain is Tegument protein UL46 homolog from Equine herpesvirus 1 (strain Ab4p) (EHV-1).